Consider the following 117-residue polypeptide: Ig heavy chain V region 5-76 (117 aa).

The first 19 residues, 1–19 (MNFVLSLIFLALILKGVQC), serve as a signal peptide directing secretion. Positions 20-49 (EVHLVESGGGLVKPGGSLKLSCVVSGFTFN) are framework-1. Residues C41 and C115 are joined by a disulfide bond. The tract at residues 50–54 (KYAMS) is complementarity-determining-1. Positions 55–68 (WVRQTPEKRLEWVA) are framework-2. Positions 69–85 (TISSGGLYTYYPDSVKG) are complementarity-determining-2. The interval 86–117 (RFTISRDNAGNTLYLQMSSLRSEDTAMYYCAR) is framework-3.

This Mus musculus (Mouse) protein is Ig heavy chain V region 5-76.